The chain runs to 227 residues: MMEVLLRLLVTQVILLALATSFVSCYDPNPLQDFCVAASETNRVFVNGKFCKDPKSVTANDFSYSGLNIARNTTNFLGSNVTTVDVNKIPGLNTLGVSLARLDFAQGGQNPPHIHPRATEILVVTKGKLLVGFVSSNQDNNRLFYKVLKRGDVFVFPIGLIHFQMNVRRTRAVAFAGFGSQNPGTIRIADAVFGSNPSIPQEVLAKAFQLDVKLVRFLHIVFGPPLW.

A signal peptide spans 1 to 25 (MMEVLLRLLVTQVILLALATSFVSC). The cysteines at positions 35 and 51 are disulfide-linked. A Cupin type-1 domain is found at 65–216 (SGLNIARNTT…AFQLDVKLVR (152 aa)). N-linked (GlcNAc...) asparagine glycans are attached at residues asparagine 72 and asparagine 80. Residues histidine 113, histidine 115, glutamate 120, and histidine 162 each coordinate Mn(2+).

It belongs to the germin family. As to quaternary structure, oligomer (believed to be a pentamer but probably hexamer).

Its subcellular location is the secreted. The protein resides in the extracellular space. The protein localises to the apoplast. Its function is as follows. May play a role in plant defense. Probably has no oxalate oxidase activity even if the active site is conserved. The polypeptide is Germin-like protein subfamily 1 member 6 (Arabidopsis thaliana (Mouse-ear cress)).